Here is a 335-residue protein sequence, read N- to C-terminus: Tetraacyldisaccharide 4'-kinase (335 aa).

Residue H51–T58 coordinates ATP.

The protein belongs to the LpxK family.

It catalyses the reaction a lipid A disaccharide + ATP = a lipid IVA + ADP + H(+). It participates in glycolipid biosynthesis; lipid IV(A) biosynthesis; lipid IV(A) from (3R)-3-hydroxytetradecanoyl-[acyl-carrier-protein] and UDP-N-acetyl-alpha-D-glucosamine: step 6/6. Its function is as follows. Transfers the gamma-phosphate of ATP to the 4'-position of a tetraacyldisaccharide 1-phosphate intermediate (termed DS-1-P) to form tetraacyldisaccharide 1,4'-bis-phosphate (lipid IVA). In Bradyrhizobium sp. (strain ORS 278), this protein is Tetraacyldisaccharide 4'-kinase.